The primary structure comprises 443 residues: Histidinol dehydrogenase (443 aa).

Residues Y133, Q191, and N214 each coordinate NAD(+). 3 residues coordinate substrate: S240, Q262, and H265. Residues Q262 and H265 each coordinate Zn(2+). Residues E329 and H330 each act as proton acceptor in the active site. Substrate-binding residues include H330, D363, E417, and H422. D363 is a Zn(2+) binding site. Residue H422 coordinates Zn(2+).

The protein belongs to the histidinol dehydrogenase family. As to quaternary structure, homodimer. It depends on Zn(2+) as a cofactor.

It carries out the reaction L-histidinol + 2 NAD(+) + H2O = L-histidine + 2 NADH + 3 H(+). It participates in amino-acid biosynthesis; L-histidine biosynthesis; L-histidine from 5-phospho-alpha-D-ribose 1-diphosphate: step 9/9. Functionally, catalyzes the sequential NAD-dependent oxidations of L-histidinol to L-histidinaldehyde and then to L-histidine. The sequence is that of Histidinol dehydrogenase from Yersinia pestis.